Here is a 383-residue protein sequence, read N- to C-terminus: MTDYTPDETPGIALRDISKVYSSRTGDVVAVHALTLAVRSGEFFSLLGPSGCGKTTTLRMIAGFEEPTTGRILLEGRDVTDVPPHRRDVNMVFQNYALFPHLTVWENVAFGPKRKKLPREEIRRRVGEALELVDLVGREKRRPDELSGGQQQRVALARALVNRPRALLLDEPLGALDLKLRQAMQLELKRIQREAGVTFVYVTHDQGEALTMSDRIAVMNAGRVEQLGTPREIYETPSTPFVAGFIGTSNVISAPLARIEGAIALLATSADERVLVPLRVPVPPGASISATVRPEKIRLSLHPPDGDRCRLLGVVREVVYLGTATQYVVATSVAEQLVVYAQNDGTADLVPAPGDRIWLWWRPEHGYQLIHADATDVPEEAAP.

Residues 12-246 (IALRDISKVY…PSTPFVAGFI (235 aa)) form the ABC transporter domain. Residue 48–55 (GPSGCGKT) coordinates ATP.

Belongs to the ABC transporter superfamily. Spermidine/putrescine importer (TC 3.A.1.11.1) family. In terms of assembly, the complex is composed of two ATP-binding proteins (PotA), two transmembrane proteins (PotB and PotC) and a solute-binding protein (PotD).

It is found in the cell membrane. It catalyses the reaction ATP + H2O + polyamine-[polyamine-binding protein]Side 1 = ADP + phosphate + polyamineSide 2 + [polyamine-binding protein]Side 1.. Its function is as follows. Part of the ABC transporter complex PotABCD involved in spermidine/putrescine import. Responsible for energy coupling to the transport system. This is Spermidine/putrescine import ATP-binding protein PotA from Acidothermus cellulolyticus (strain ATCC 43068 / DSM 8971 / 11B).